A 438-amino-acid chain; its full sequence is MQSVDTTKYIIYADITADGIVERPDVVGAIFGQTEGLLGSDLDLRDLQKTGRLGRIDVQISSSGGKSMGTISIPSSFDKVETAILAAALETIDRVGPCMARIHVTKIEDVRAAKRKYIIDRAKRILVEMFDENLLETEQITEEIKQSVRVEEITYIGKDNLPAGPNVLDSDAILVVEGRADVLNLLKYGIKNAVAVGGTNIPPTITELCSKKIATAFTDGDRGGELIVKELLQVADIDYVARAPEGKCVEELTQKEIIRALRQKIPVEQVMDMYKIKPFTRKKREIVTKRKSLIRERPVSVRTVAQVVPIAHHAEIAPPHEIQTRVHQKEVHEHYEEPEIEGQEPEEWFKHHVEELDGTLTARLFDRNNNPIRDVAVRDLARELKESNGSVHGVIFDGVITQRLLDIAAEKGLDYLIGAKMGSIAKTPVGIKVITSGQ.

Residues 171-245 (DAILVVEGRA…DIDYVARAPE (75 aa)) form the Toprim domain. Mg(2+) is bound by residues Glu177, Asp219, and Asp221.

The protein belongs to the archaeal DnaG primase family. In terms of assembly, forms a ternary complex with MCM helicase and DNA. Component of the archaeal exosome complex. Mg(2+) is required as a cofactor.

The catalysed reaction is ssDNA + n NTP = ssDNA/pppN(pN)n-1 hybrid + (n-1) diphosphate.. Its function is as follows. RNA polymerase that catalyzes the synthesis of short RNA molecules used as primers for DNA polymerase during DNA replication. Also part of the exosome, which is a complex involved in RNA degradation. Acts as a poly(A)-binding protein that enhances the interaction between heteromeric, adenine-rich transcripts and the exosome. In Methanothrix thermoacetophila (strain DSM 6194 / JCM 14653 / NBRC 101360 / PT) (Methanosaeta thermophila), this protein is DNA primase DnaG.